The following is a 409-amino-acid chain: Major capsid protein (409 aa).

This sequence belongs to the lambda phage major capsid protein family. As to quaternary structure, homomultimer. Interacts with the portal protein. Interacts with the decoration protein.

It localises to the virion. The protein localises to the host cytoplasm. In terms of biological role, assembles to form an icosahedric capsid shell with a T=7 symmetry although with a diameter of about 82 nm, which is a larger volume than the usual T=7 capsids. A dramatic reconfiguration of the capsid shell that expands the procaspid from a diameter of 66 nm to a supersized capsid of 82 nm, allows packaging of the large viral DNA genome. The capsid decoration protein binds the expanded capsid and stabilizes it. This is Major capsid protein from Thermus virus P23-45 (Thermus thermophilus phage P23-45).